The chain runs to 170 residues: Double homeobox protein 1 (170 aa).

DNA-binding regions (homeobox) lie at residues 19–78 and 94–153; these read GRRM…LRQH and GRRK…RGQS. The segment at 75–100 is disordered; it reads LRQHRRQSRPWPGRRDPQKGRRKRTA.

Belongs to the paired homeobox family. As to expression, expressed in rhabdomyosarcoma TE671 cells as well as in several other normal and cancer cells.

It is found in the nucleus. Its function is as follows. Probable transcription activator. Binds the P5 DNA element sequence 5'-GATCTGAGTCTAATTGAGAATTACTGTAC-3'. This chain is Double homeobox protein 1 (DUX1), found in Homo sapiens (Human).